A 404-amino-acid chain; its full sequence is Ubiquitin-like modifier-activating enzyme 5 (404 aa).

Position 45 is a phosphoserine (Ser45). Residues Gly83, Asp104, Lys127, Asn150, and Asn184 each coordinate ATP. 2 residues coordinate Zn(2+): Cys226 and Cys229. Residue Cys250 is the Glycyl thioester intermediate of the active site. Residues Cys303 and Cys308 each coordinate Zn(2+). A UFM1-interacting sequence (UIS) motif is present at residues 334–346 (IIHEDNEWGIELV). A linker region spans residues 347–377 (SEVSEEELKNFSGPVPDLPEGITVAYTIPKK). Phosphoserine is present on residues Ser358 and Ser393. The UFC1-binding sequence (UFC) signature appears at 389 to 404 (DSGESLEDLMAKMKNM).

The protein belongs to the ubiquitin-activating E1 family. UBA5 subfamily. Homodimer; homodimerization is required for UFM1 activation. Interacts (via UIS motif) with UFM1; binds UFM1 via a trans-binding mechanism in which UFM1 interacts with distinct sites in both subunits of the UBA5 homodimer. Interacts (via C-terminus) with UFC1. Interacts (via UIS motif) with GABARAPL2 and, with lower affinity, with GABARAP and GABARAPL1. In terms of tissue distribution, widely expressed.

It is found in the cytoplasm. The protein resides in the nucleus. It localises to the endoplasmic reticulum membrane. The protein localises to the golgi apparatus. Functionally, E1-like enzyme which specifically catalyzes the first step in ufmylation. Activates UFM1 by first adenylating its C-terminal glycine residue with ATP, and thereafter linking this residue to the side chain of a cysteine residue in E1, yielding a UFM1-E1 thioester and free AMP. Activates UFM1 via a trans-binding mechanism, in which UFM1 interacts with distinct sites in both subunits of the UBA5 homodimer. Trans-binding also promotes stabilization of the UBA5 homodimer, and enhances ATP-binding. Transfer of UFM1 from UBA5 to the E2-like enzyme UFC1 also takes place using a trans mechanism. Ufmylation plays a key role in various processes, such as ribosome recycling, response to DNA damage, interferon response or reticulophagy (also called ER-phagy). Ufmylation is essential for erythroid differentiation of both megakaryocytes and erythrocytes. This is Ubiquitin-like modifier-activating enzyme 5 from Homo sapiens (Human).